The chain runs to 414 residues: NADH-ubiquinone oxidoreductase chain 4 (414 aa).

A run of 10 helical transmembrane segments spans residues 18–38 (LVQLYIVYEASLIPMVIMIGV), 47–67 (IAAFQILIYTLIGSIFMLMSI), 96–116 (IIFIGFFIGFAVKIPIAPLHL), 126–146 (PTAGSVLLAGILLKLGGYGYI), 160–180 (YFPIIGGICLISILYTGIATL), 188–208 (IVAYSSISHMNVIVLGLFSGV), 216–236 (IILMIGHGIVSGGLFLCIGVI), 254–274 (MMPIMAILFFLLVLGNIAFPI), 293–313 (IIIAFFSALSMIITAIYSFWL), and 375–395 (VNIFEFVSIGLMVILMLIVGM).

Belongs to the complex I subunit 4 family.

It localises to the mitochondrion membrane. The enzyme catalyses a ubiquinone + NADH + 5 H(+)(in) = a ubiquinol + NAD(+) + 4 H(+)(out). Functionally, core subunit of the mitochondrial membrane respiratory chain NADH dehydrogenase (Complex I) that is believed to belong to the minimal assembly required for catalysis. Complex I functions in the transfer of electrons from NADH to the respiratory chain. The immediate electron acceptor for the enzyme is believed to be ubiquinone. This Dictyostelium citrinum (Slime mold) protein is NADH-ubiquinone oxidoreductase chain 4 (nad4).